The chain runs to 83 residues: Cytochrome b559 subunit alpha (83 aa).

A helical transmembrane segment spans residues 21 to 35 (VIHSITIPSLFIAGW). His-23 provides a ligand contact to heme.

The protein belongs to the PsbE/PsbF family. In terms of assembly, heterodimer of an alpha subunit and a beta subunit. PSII is composed of 1 copy each of membrane proteins PsbA, PsbB, PsbC, PsbD, PsbE, PsbF, PsbH, PsbI, PsbJ, PsbK, PsbL, PsbM, PsbT, PsbX, PsbY, PsbZ, Psb30/Ycf12, at least 3 peripheral proteins of the oxygen-evolving complex and a large number of cofactors. It forms dimeric complexes. The cofactor is heme b.

Its subcellular location is the plastid. It is found in the chloroplast thylakoid membrane. This b-type cytochrome is tightly associated with the reaction center of photosystem II (PSII). PSII is a light-driven water:plastoquinone oxidoreductase that uses light energy to abstract electrons from H(2)O, generating O(2) and a proton gradient subsequently used for ATP formation. It consists of a core antenna complex that captures photons, and an electron transfer chain that converts photonic excitation into a charge separation. The sequence is that of Cytochrome b559 subunit alpha from Daucus carota (Wild carrot).